The chain runs to 154 residues: Myoglobin (154 aa).

Positions 2 to 148 constitute a Globin domain; the sequence is GLSDGEWQMV…FRNDIAAKYK (147 aa). Ser4 and Ser32 each carry phosphoserine. His65 is a binding site for nitrite. His65 serves as a coordination point for O2. The residue at position 68 (Thr68) is a Phosphothreonine. His94 serves as a coordination point for heme b. Ser121 and Ser133 each carry phosphoserine.

Belongs to the globin family. In terms of assembly, monomeric.

The protein resides in the cytoplasm. Its subcellular location is the sarcoplasm. The catalysed reaction is Fe(III)-heme b-[protein] + nitric oxide + H2O = Fe(II)-heme b-[protein] + nitrite + 2 H(+). It carries out the reaction H2O2 + AH2 = A + 2 H2O. Functionally, monomeric heme protein which primary function is to store oxygen and facilitate its diffusion within muscle tissues. Reversibly binds oxygen through a pentacoordinated heme iron and enables its timely and efficient release as needed during periods of heightened demand. Depending on the oxidative conditions of tissues and cells, and in addition to its ability to bind oxygen, it also has a nitrite reductase activity whereby it regulates the production of bioactive nitric oxide. Under stress conditions, like hypoxia and anoxia, it also protects cells against reactive oxygen species thanks to its pseudoperoxidase activity. This chain is Myoglobin, found in Rattus norvegicus (Rat).